A 113-amino-acid polypeptide reads, in one-letter code: Integration host factor subunit alpha (113 aa).

Positions 87 to 113 (NALNGEVSDETTEGADDDDDEEGEGDE) are disordered. The segment covering 93-113 (VSDETTEGADDDDDEEGEGDE) has biased composition (acidic residues).

Belongs to the bacterial histone-like protein family. As to quaternary structure, heterodimer of an alpha and a beta chain.

This protein is one of the two subunits of integration host factor, a specific DNA-binding protein that functions in genetic recombination as well as in transcriptional and translational control. The sequence is that of Integration host factor subunit alpha from Anaeromyxobacter dehalogenans (strain 2CP-1 / ATCC BAA-258).